The primary structure comprises 517 residues: Crotonobetaine/carnitine--CoA ligase (517 aa).

Belongs to the ATP-dependent AMP-binding enzyme family.

It carries out the reaction 4-(trimethylamino)butanoate + ATP + CoA = 4-(trimethylamino)butanoyl-CoA + AMP + diphosphate. The catalysed reaction is crotonobetaine + ATP + CoA = crotonobetainyl-CoA + AMP + diphosphate. It catalyses the reaction (R)-carnitine + ATP + CoA = (R)-carnitinyl-CoA + AMP + diphosphate. It functions in the pathway amine and polyamine metabolism; carnitine metabolism. Its function is as follows. Catalyzes the transfer of CoA to carnitine, generating the initial carnitinyl-CoA needed for the CaiB reaction cycle. Also has activity toward crotonobetaine and gamma-butyrobetaine. The protein is Crotonobetaine/carnitine--CoA ligase of Shigella sonnei (strain Ss046).